The primary structure comprises 732 residues: Zinc/cadmium/lead-transporting P-type ATPase (732 aa).

The Cytoplasmic segment spans residues Met1–Arg124. Residues Thr48–Arg112 form the HMA domain. Zn(2+) contacts are provided by Asp58, Cys59, and Cys62. The chain crosses the membrane as a helical span at residues Leu125 to Glu145. A topological domain (periplasmic) is located at residue Gln146. A helical membrane pass occupies residues Phe147–Ile167. Over Ala168–Ser179 the chain is Cytoplasmic. The helical transmembrane segment at Tyr180–Ile197 threads the bilayer. Topologically, residues Gly198 to Glu202 are periplasmic. The chain crosses the membrane as a helical span at residues Ala203–Ser222. At Arg223–Pro356 the chain is on the cytoplasmic side. A helical transmembrane segment spans residues Ala357–Trp377. The Periplasmic portion of the chain corresponds to Gln378–Lys383. Residues Gly384–Ile404 traverse the membrane as a helical segment. Zn(2+) is bound by residues Cys392 and Cys394. The Cytoplasmic portion of the chain corresponds to Thr405–Asn685. The active-site 4-aspartylphosphate intermediate is the Asp436. Residues Asp436, Thr438, and Asp628 each contribute to the Mg(2+) site. The chain crosses the membrane as a helical span at residues Ile686–Leu702. The Periplasmic segment spans residues Gly703–Leu707. A helical transmembrane segment spans residues Trp708–Leu729. Asp714 is a Zn(2+) binding site. Residues Arg730 to Arg732 lie on the Cytoplasmic side of the membrane.

This sequence belongs to the cation transport ATPase (P-type) (TC 3.A.3) family. Type IB subfamily.

Its subcellular location is the cell inner membrane. It catalyses the reaction Pb(2+)(in) + ATP + H2O = Pb(2+)(out) + ADP + phosphate + H(+). The enzyme catalyses Zn(2+)(in) + ATP + H2O = Zn(2+)(out) + ADP + phosphate + H(+). The catalysed reaction is Cd(2+)(in) + ATP + H2O = Cd(2+)(out) + ADP + phosphate + H(+). Inhibited by orthovanadate. Its function is as follows. Confers resistance to zinc, cadmium and lead. Couples the hydrolysis of ATP with the export of zinc, cadmium or lead, with highest activity when the metals are present as metal-thiolate complexes. Can also bind nickel, copper, cobalt and mercury. This Escherichia coli (strain K12) protein is Zinc/cadmium/lead-transporting P-type ATPase.